Reading from the N-terminus, the 61-residue chain is [Thr6, Val10, Asp11]-phyllokinin (61 aa).

An N-terminal signal peptide occupies residues 1 to 22 (MSFLKKSLFLVLFLGLVSFSIC). A propeptide spanning residues 23–50 (EEEKRETEEEENEDEMNEESEEKRESPE) is cleaved from the precursor. The disordered stretch occupies residues 24–61 (EEKRETEEEENEDEMNEESEEKRESPERPPGFTPFRVD). Over residues 30 to 42 (EEEENEDEMNEES) the composition is skewed to acidic residues.

This sequence belongs to the frog skin active peptide (FSAP) family. Bradykinin-related peptide subfamily. In terms of tissue distribution, expressed by the skin glands.

It is found in the secreted. Its function is as follows. Induces relaxation of rat smooth muscle from tail artery and contraction of that from ileum, urinary bladder and uterus. Binds to both bradykinin receptor B1 (BDKRB1) and B2 (BDKRB2). This chain is [Thr6, Val10, Asp11]-phyllokinin, found in Agalychnis spurrelli (Gliding leaf frog).